The sequence spans 105 residues: Endogenous retrovirus group K member 104 Rec protein (105 aa).

Positions 1-43 are disordered; it reads MNPSEMQRKAPPRRRRHCNRAPLTHKMNKMVTSEEEMKLPSTK. The segment covering 10-19 has biased composition (basic residues); the sequence is APPRRRRHCN. The Nuclear localization signal motif lies at 13–20; the sequence is RRRRHCNR. The Nuclear export signal motif lies at 50 to 59; the sequence is WAQLKKLTQL.

Forms homodimers, homotrimers, and homotetramers via a C-terminal domain. Associates with XPO1 and with ZNF145.

Its subcellular location is the cytoplasm. The protein localises to the nucleus. The protein resides in the nucleolus. Functionally, retroviral replication requires the nuclear export and translation of unspliced, singly-spliced and multiply-spliced derivatives of the initial genomic transcript. Rec interacts with a highly structured RNA element (RcRE) present in the viral 3'LTR and recruits the cellular nuclear export machinery. This permits export to the cytoplasm of unspliced genomic or incompletely spliced subgenomic viral transcripts. This chain is Endogenous retrovirus group K member 104 Rec protein (HERV-K104), found in Homo sapiens (Human).